The chain runs to 47 residues: Large ribosomal subunit protein bL34 (47 aa).

This sequence belongs to the bacterial ribosomal protein bL34 family.

This Mycobacterium ulcerans (strain Agy99) protein is Large ribosomal subunit protein bL34.